We begin with the raw amino-acid sequence, 428 residues long: Adenylosuccinate synthetase (428 aa).

GTP-binding positions include 12–18 and 40–42; these read GDEGKGK and GHS. The Proton acceptor role is filled by Asp13. 2 residues coordinate Mg(2+): Asp13 and Gly40. Residues 13 to 16, 38 to 41, Thr128, Arg142, Gln223, Thr238, and Arg302 each bind IMP; these read DEGK and NAGH. His41 (proton donor) is an active-site residue. 298-304 is a binding site for substrate; sequence VTTGRPR. Residues Arg304, 330-332, and 412-414 each bind GTP; these read KLD and GTG.

This sequence belongs to the adenylosuccinate synthetase family. As to quaternary structure, homodimer. Mg(2+) serves as cofactor.

It localises to the cytoplasm. The catalysed reaction is IMP + L-aspartate + GTP = N(6)-(1,2-dicarboxyethyl)-AMP + GDP + phosphate + 2 H(+). It functions in the pathway purine metabolism; AMP biosynthesis via de novo pathway; AMP from IMP: step 1/2. Plays an important role in the de novo pathway of purine nucleotide biosynthesis. Catalyzes the first committed step in the biosynthesis of AMP from IMP. The chain is Adenylosuccinate synthetase from Bifidobacterium longum (strain NCC 2705).